A 1252-amino-acid chain; its full sequence is DNA-directed RNA polymerase subunit beta (1252 aa).

This sequence belongs to the RNA polymerase beta chain family. In terms of assembly, the RNAP catalytic core consists of 2 alpha, 1 beta, 1 beta' and 1 omega subunit. When a sigma factor is associated with the core the holoenzyme is formed, which can initiate transcription.

The catalysed reaction is RNA(n) + a ribonucleoside 5'-triphosphate = RNA(n+1) + diphosphate. DNA-dependent RNA polymerase catalyzes the transcription of DNA into RNA using the four ribonucleoside triphosphates as substrates. This chain is DNA-directed RNA polymerase subunit beta, found in Chlamydia abortus (strain DSM 27085 / S26/3) (Chlamydophila abortus).